A 104-amino-acid polypeptide reads, in one-letter code: Small ribosomal subunit protein uS10 (104 aa).

Belongs to the universal ribosomal protein uS10 family. Part of the 30S ribosomal subunit.

In terms of biological role, involved in the binding of tRNA to the ribosomes. In Helicobacter pylori (strain J99 / ATCC 700824) (Campylobacter pylori J99), this protein is Small ribosomal subunit protein uS10.